A 373-amino-acid chain; its full sequence is Spermidine/putrescine import ATP-binding protein PotA (373 aa).

Residues 5–235 (IVFEHVSKKF…PKSSFVADFI (231 aa)) form the ABC transporter domain. Residue 37–44 (GPSGCGKT) participates in ATP binding.

The protein belongs to the ABC transporter superfamily. Spermidine/putrescine importer (TC 3.A.1.11.1) family. As to quaternary structure, the complex is composed of two ATP-binding proteins (PotA), two transmembrane proteins (PotB and PotC) and a solute-binding protein (PotD).

Its subcellular location is the cell inner membrane. It carries out the reaction ATP + H2O + polyamine-[polyamine-binding protein]Side 1 = ADP + phosphate + polyamineSide 2 + [polyamine-binding protein]Side 1.. Part of the ABC transporter complex PotABCD involved in spermidine/putrescine import. Responsible for energy coupling to the transport system. The polypeptide is Spermidine/putrescine import ATP-binding protein PotA (Protochlamydia amoebophila (strain UWE25)).